We begin with the raw amino-acid sequence, 191 residues long: 3-isopropylmalate dehydratase small subunit (191 aa).

Belongs to the LeuD family. LeuD type 1 subfamily. In terms of assembly, heterodimer of LeuC and LeuD.

It catalyses the reaction (2R,3S)-3-isopropylmalate = (2S)-2-isopropylmalate. The protein operates within amino-acid biosynthesis; L-leucine biosynthesis; L-leucine from 3-methyl-2-oxobutanoate: step 2/4. Functionally, catalyzes the isomerization between 2-isopropylmalate and 3-isopropylmalate, via the formation of 2-isopropylmaleate. This Anaeromyxobacter dehalogenans (strain 2CP-C) protein is 3-isopropylmalate dehydratase small subunit.